The following is a 394-amino-acid chain: Stearoyl-[acyl-carrier-protein] 9-desaturase 1, chloroplastic (394 aa).

The N-terminal 37 residues, 1 to 37 (MVMAMDRIALFSSSSSVYHHGSSHSHGSKSSRVFTIR), are a transit peptide targeting the chloroplast. Fe cation is bound by residues E135, E173, H176, E226, E259, and H262.

It belongs to the fatty acid desaturase type 2 family. As to quaternary structure, homodimer. Fe(2+) serves as cofactor. As to expression, ubiquitously expressed.

Its subcellular location is the plastid. It is found in the chloroplast. The catalysed reaction is octadecanoyl-[ACP] + 2 reduced [2Fe-2S]-[ferredoxin] + O2 + 2 H(+) = (9Z)-octadecenoyl-[ACP] + 2 oxidized [2Fe-2S]-[ferredoxin] + 2 H2O. It functions in the pathway lipid metabolism; fatty acid metabolism. Its function is as follows. Converts stearoyl-ACP to oleoyl-ACP by introduction of a cis double bond between carbons 9 and 10 of the acyl chain. The protein is Stearoyl-[acyl-carrier-protein] 9-desaturase 1, chloroplastic (S-ACP-DES1) of Arabidopsis thaliana (Mouse-ear cress).